The following is a 521-amino-acid chain: Organic cation/carnitine transporter 6 (521 aa).

Topologically, residues 1 to 37 are cytoplasmic; it reads MADPISEPLLSHLTDDSGVNEKTRLEALTFDKIVEQS. A helical membrane pass occupies residues 38–58; sequence LSDFGFWQFFQISLVGLALLF. Residues 59–123 lie on the Extracellular side of the membrane; the sequence is DAQQIFITVY…GLECSSSLLR (65 aa). N79 carries an N-linked (GlcNAc...) asparagine glycan. The chain crosses the membrane as a helical span at residues 124–144; sequence GMPSSAFYIGAIVGGFFLALI. Residues 145-154 lie on the Cytoplasmic side of the membrane; that stretch reads PDDSLGRKKL. A helical membrane pass occupies residues 155–177; sequence VLFSTFAMSITSISVIFSTNVWI. Residues 178–182 lie on the Extracellular side of the membrane; it reads YTFLK. Residues 183-200 traverse the membrane as a helical segment; sequence FIIGFSRSQTWSYALVLI. Residue 200-207 participates in ATP binding; it reads ISERVSTR. Residues 201–213 lie on the Cytoplasmic side of the membrane; it reads SERVSTRWRPRAT. A helical membrane pass occupies residues 214 to 234; that stretch reads MIPFTLFVLGFMSLSGIAFLA. The Extracellular portion of the chain corresponds to 235–241; that stretch reads QDSSWRY. Residues 242 to 262 form a helical membrane-spanning segment; sequence LYLYTSVPAVFYCIFLYLFAL. The Cytoplasmic portion of the chain corresponds to 263–326; the sequence is ESPRWLHMQG…FFFRKWAFRR (64 aa). The chain crosses the membrane as a helical span at residues 327–347; it reads ILVVMIIMFGLGISYYGVPLA. Residues 348–356 are Extracellular-facing; the sequence is ARDIDVNIY. The chain crosses the membrane as a helical span at residues 357 to 377; the sequence is LSETLNALVELPTFVITPILL. Topologically, residues 378–385 are cytoplasmic; that stretch reads ERFNRRSS. A helical transmembrane segment spans residues 386–406; it reads VLVNTLLGGASGVLCFVLSIL. Topologically, residues 407 to 412 are extracellular; the sequence is GKTEIA. Residues 413–433 traverse the membrane as a helical segment; that stretch reads FAFELGTFFCARIGFNLMAVF. Residues 434 to 447 lie on the Cytoplasmic side of the membrane; sequence MVEMFPTCVRSSAT. Residues 448 to 468 form a helical membrane-spanning segment; the sequence is MMFRQALVVGGACCPLIASIG. The Extracellular segment spans residues 469 to 473; that stretch reads RYIPS. A helical transmembrane segment spans residues 474–494; it reads VSFAIFGIAMSGLGMFVLILP. Residues 495–521 lie on the Cytoplasmic side of the membrane; the sequence is ETKGLSLCDSMEEQEKRDQAVNTSHVC.

Belongs to the major facilitator (TC 2.A.1) superfamily. Organic cation transporter (TC 2.A.1.19) family. As to expression, expressed in roots and stems. In the stem of secondary inflorescences, localized to the phloem. Also present in flowers, specifically in the stamen, in the filaments and the connective, and restricted to major veins in leaves.

The protein localises to the vacuole membrane. Functionally, high affinity carnitine transporter involved in the active cellular uptake of carnitine. Also transports organic cations. The protein is Organic cation/carnitine transporter 6 (OCT6) of Arabidopsis thaliana (Mouse-ear cress).